A 121-amino-acid polypeptide reads, in one-letter code: Tachykinin-3 (121 aa).

The N-terminal stretch at 1-16 (MRIMLLFTAILAFSLA) is a signal peptide. Positions 17–78 (QSFGAVCKEP…TDPKESTSPE (62 aa)) are excised as a propeptide. A Methionine amide modification is found at Met-90. Positions 93 to 121 (RSVQPDSPTDVNQENVPSFGILKYPPRAE) are disordered. A propeptide spanning residues 94 to 121 (SVQPDSPTDVNQENVPSFGILKYPPRAE) is cleaved from the precursor. Polar residues predominate over residues 96–108 (QPDSPTDVNQENV).

This sequence belongs to the tachykinin family.

The protein localises to the secreted. Its function is as follows. Tachykinins are active peptides which excite neurons, evoke behavioral responses, are potent vasodilators and secretagogues, and contract (directly or indirectly) many smooth muscles. Is a critical central regulator of gonadal function. The chain is Tachykinin-3 (TAC3) from Homo sapiens (Human).